We begin with the raw amino-acid sequence, 159 residues long: Large ribosomal subunit protein bL17 (159 aa).

The span at P119–K138 shows a compositional bias: low complexity. The segment at P119–D159 is disordered. Positions E143–D159 are enriched in acidic residues.

The protein belongs to the bacterial ribosomal protein bL17 family. As to quaternary structure, part of the 50S ribosomal subunit. Contacts protein L32.

In Leifsonia xyli subsp. xyli (strain CTCB07), this protein is Large ribosomal subunit protein bL17.